Reading from the N-terminus, the 440-residue chain is Enolase (440 aa).

Residues K120–V189 are igE-binding determinant. 2 residues coordinate substrate: H159 and E168. E211 acts as the Proton donor in catalysis. Mg(2+) is bound by residues D246, E297, and D324. Substrate contacts are provided by E297 and D324. K349 functions as the Proton acceptor in the catalytic mechanism. Substrate contacts are provided by residues S376–S379 and K400.

This sequence belongs to the enolase family. In terms of assembly, homodimer. Mg(2+) is required as a cofactor.

The protein localises to the cytoplasm. The enzyme catalyses (2R)-2-phosphoglycerate = phosphoenolpyruvate + H2O. It participates in carbohydrate degradation; glycolysis; pyruvate from D-glyceraldehyde 3-phosphate: step 4/5. The chain is Enolase (ENO) from Davidiella tassiana (Mycosphaerella tassiana).